The primary structure comprises 955 residues: RNA polymerase-associated protein RapA (955 aa).

The region spanning 163–333 is the Helicase ATP-binding domain; sequence EVGHRYAPRV…FARLRLLDPE (171 aa). An ATP-binding site is contributed by 176-183; the sequence is DEVGLGKT. The DEAH box motif lies at 279–282; that stretch reads DEAH. In terms of domain architecture, Helicase C-terminal spans 478–642; sequence RVEWLLELLL…AVRDELFELL (165 aa).

The protein belongs to the SNF2/RAD54 helicase family. RapA subfamily. In terms of assembly, interacts with the RNAP. Has a higher affinity for the core RNAP than for the holoenzyme. Its ATPase activity is stimulated by binding to RNAP.

In terms of biological role, transcription regulator that activates transcription by stimulating RNA polymerase (RNAP) recycling in case of stress conditions such as supercoiled DNA or high salt concentrations. Probably acts by releasing the RNAP, when it is trapped or immobilized on tightly supercoiled DNA. Does not activate transcription on linear DNA. Probably not involved in DNA repair. The chain is RNA polymerase-associated protein RapA from Aeromonas hydrophila subsp. hydrophila (strain ATCC 7966 / DSM 30187 / BCRC 13018 / CCUG 14551 / JCM 1027 / KCTC 2358 / NCIMB 9240 / NCTC 8049).